The chain runs to 107 residues: ATP-dependent Clp protease adapter protein ClpS (107 aa).

The protein belongs to the ClpS family. In terms of assembly, binds to the N-terminal domain of the chaperone ClpA.

In terms of biological role, involved in the modulation of the specificity of the ClpAP-mediated ATP-dependent protein degradation. The sequence is that of ATP-dependent Clp protease adapter protein ClpS from Syntrophus aciditrophicus (strain SB).